Here is a 128-residue protein sequence, read N- to C-terminus: Fumarate reductase subunit C (128 aa).

The next 3 helical transmembrane spans lie at 31-51, 67-87, and 106-126; these read ATCIATIWFCLVLLYGVISLG, VVILNIISLAGLLYHAATLYV, and ILKNALWAITGLVSLLALVLV.

This sequence belongs to the FrdC family. In terms of assembly, part of an enzyme complex containing four subunits: a flavoprotein (FrdA), an iron-sulfur protein (FrdB), and two hydrophobic anchor proteins (FrdC and FrdD).

The protein resides in the cell inner membrane. Its function is as follows. Anchors the catalytic components of the fumarate reductase complex to the cell membrane, binds quinones. The chain is Fumarate reductase subunit C from Haemophilus ducreyi (strain 35000HP / ATCC 700724).